Reading from the N-terminus, the 51-residue chain is Large ribosomal subunit protein bL33 (51 aa).

A disordered region spans residues 1–23 (MRDKIKLESSAGTGHFYTTTKNK). The span at 10–20 (SAGTGHFYTTT) shows a compositional bias: polar residues.

The protein belongs to the bacterial ribosomal protein bL33 family.

This is Large ribosomal subunit protein bL33 from Chromobacterium violaceum (strain ATCC 12472 / DSM 30191 / JCM 1249 / CCUG 213 / NBRC 12614 / NCIMB 9131 / NCTC 9757 / MK).